Here is a 697-residue protein sequence, read N- to C-terminus: PHD finger protein At2g01810 (697 aa).

2 disordered regions span residues 319 to 362 (DENS…QYYS) and 457 to 478 (EQKR…TSTT). The segment covering 339–349 (SGRDTVLDDHN) has biased composition (basic and acidic residues). A PHD-type zinc finger spans residues 635-685 (TVDCKCGARDDDGERMVACDACKVWHHTLCNSIEDDEAVPSVFLCNMCYGD).

It is found in the nucleus. The polypeptide is PHD finger protein At2g01810 (Arabidopsis thaliana (Mouse-ear cress)).